A 426-amino-acid polypeptide reads, in one-letter code: Torsin-4A (426 aa).

A disordered region spans residues 41-60 (QPGTEPDSGTGTLGPTGSLG). A compositionally biased stretch (low complexity) spans 48-60 (SGTGTLGPTGSLG). Residues serine 58 and serine 76 each carry the phosphoserine modification. Residue threonine 84 is modified to Phosphothreonine. The residue at position 101 (serine 101) is a Phosphoserine. Residues 117–133 (CLLLLVAIVGFQVLNAI) form a helical membrane-spanning segment. Residue 189 to 196 (GPSGVGKS) participates in ATP binding.

This sequence belongs to the ClpA/ClpB family. Torsin subfamily.

It is found in the membrane. The chain is Torsin-4A (Tor4a) from Mus musculus (Mouse).